A 412-amino-acid chain; its full sequence is Serine hydroxymethyltransferase (412 aa).

Residues Leu-117 and 121–123 (GHL) contribute to the (6S)-5,6,7,8-tetrahydrofolate site. Residue Lys-226 is modified to N6-(pyridoxal phosphate)lysine. 349–351 (SPF) lines the (6S)-5,6,7,8-tetrahydrofolate pocket.

This sequence belongs to the SHMT family. In terms of assembly, homodimer. It depends on pyridoxal 5'-phosphate as a cofactor.

The protein resides in the cytoplasm. The enzyme catalyses (6R)-5,10-methylene-5,6,7,8-tetrahydrofolate + glycine + H2O = (6S)-5,6,7,8-tetrahydrofolate + L-serine. It functions in the pathway one-carbon metabolism; tetrahydrofolate interconversion. Its pathway is amino-acid biosynthesis; glycine biosynthesis; glycine from L-serine: step 1/1. In terms of biological role, catalyzes the reversible interconversion of serine and glycine with tetrahydrofolate (THF) serving as the one-carbon carrier. This reaction serves as the major source of one-carbon groups required for the biosynthesis of purines, thymidylate, methionine, and other important biomolecules. Also exhibits THF-independent aldolase activity toward beta-hydroxyamino acids, producing glycine and aldehydes, via a retro-aldol mechanism. The sequence is that of Serine hydroxymethyltransferase from Lawsonia intracellularis (strain PHE/MN1-00).